Consider the following 89-residue polypeptide: LYR motif-containing protein 4 (89 aa).

Residues 44-71 (KNIADSEKIEELLNKAKANLEVIQRQGT) adopt a coiled-coil conformation.

Belongs to the complex I LYR family.

The protein localises to the mitochondrion. It localises to the nucleus. It functions in the pathway cofactor biosynthesis; iron-sulfur cluster biosynthesis. Required for nuclear and mitochondrial iron-sulfur protein biosynthesis. This chain is LYR motif-containing protein 4 (LYRM4), found in Taeniopygia guttata (Zebra finch).